A 1056-amino-acid polypeptide reads, in one-letter code: Pleckstrin homology domain-containing family M member 1 (1056 aa).

One can recognise an RUN domain in the interval 41–183 (TSEDGDANTM…LSFELSYKSA (143 aa)). Disordered regions lie at residues 215–245 (QRKE…RRNQ), 277–303 (GSKS…EDSD), and 360–422 (PAQA…QAHD). The residue at position 219 (serine 219) is a Phosphoserine. A compositionally biased stretch (polar residues) spans 389-404 (PVESTSGQQPSSTVSE). A phosphoserine mark is found at serine 432 and serine 435. Residues 451 to 483 (SREQPLESASDHPIASYRGTPGSRPGLHRHFSQ) are disordered. Phosphoserine is present on serine 490. One can recognise a PH 1 domain in the interval 534-625 (GLMKLGTVER…WLDRVREALQ (92 aa)). The LIR signature appears at 632–638 (EDEWVNV). An interaction with RAB7A region spans residues 654-1056 (CLSPSDLLSE…RKYQEQNIFA (403 aa)). The PH 2 domain maps to 683 to 777 (DAIKESLLYL…WRDLVRKVLA (95 aa)). The Phorbol-ester/DAG-type zinc-finger motif lies at 986-1040 (QHVYHCDLCTQRGFICQICQHHDIIFPFEFDTTVRCAECKTVFHQSCQAVVKKGC).

Interacts (via N- and C-terminus) with RAB7A (GTP-bound form). Simultaneously interacts with RAB7A and ARL8B; bringing about clustering and fusion of late endosomes and lysosomes. Interacts (via RUN domain) with ARL8B (GTP-bound form); the interaction is required for PLEKHM1 localization to lysosomes and for ARL8B function in delivery and degradation of endocytic and autophagic cargo in lysosomes. PLEKHM1 and PLEKHM2 compete for interaction with ARL8B. Interacts with ARL8A; the interaction is weaker than with ARL8B. Interacts with VPS41, VPS11, VPS18, VPS33A and VPS39; indicative for an association with the HOPS complex; the interactions with, at least, VPS41, VPS11, VPS18 and VPS33A require ARL8B. Interacts with GABARAP, GABARAPL, GABARAPL2, MAP1LC3A, MAP1LC3B and MAP1LC3C. Interacts with PAFAH1B. Interacts (via N- and C-terminus) with NDEL1. Interacts (via C-terminus) with MAP3K7. Interacts (via N- and C-terminus) with FAM98A. Interacts (via C-terminus) with DEF8; this interaction is weak but increased in a RAB7A-dependent manner. In colon carcinoma and breast carcinoma cells, it interacts with sialyl-lex-positive protein. As to quaternary structure, (Microbial infection) Interacts with Salmonella typhimurium sifA. As to expression, expressed in placenta, liver, prostate, thymus, spleen, ovary, colon, colon carcinoma and peripheral blood lymphocytes (PBL). Weakly expressed in brain, lung, kidney, and testis. No expression in heart, skeletal muscle, pancreas and small intestine. Predominantly expressed in the breast carcinoma cell line MCF-7.

Its subcellular location is the autolysosome membrane. It localises to the endosome membrane. The protein resides in the late endosome membrane. It is found in the lysosome membrane. In terms of biological role, acts as a multivalent adapter protein that regulates Rab7-dependent and HOPS complex-dependent fusion events in the endolysosomal system and couples autophagic and the endocytic trafficking pathways. Acts as a dual effector of RAB7A and ARL8B that simultaneously binds these GTPases, bringing about clustering and fusion of late endosomes and lysosomes. Required for late stages of endolysosomal maturation, facilitating both endocytosis-mediated degradation of growth factor receptors and autophagosome clearance. Interaction with Arl8b is a crucial factor in the terminal maturation of autophagosomes and to mediate autophagosome-lysosome fusion. Positively regulates lysosome peripheral distribution and ruffled border formation in osteoclasts. May be involved in negative regulation of endocytic transport from early endosome to late endosome/lysosome implicating its association with Rab7. May have a role in sialyl-lex-mediated transduction of apoptotic signals. Involved in bone resorption. (Microbial infection) In case of infection contributes to Salmonella typhimurium pathogenesis by supporting the integrity of the Salmonella-containing vacuole (SCV) probably in concert with the HOPS complex and Rab7. The chain is Pleckstrin homology domain-containing family M member 1 from Homo sapiens (Human).